The following is a 751-amino-acid chain: Translation initiation factor IF-2, chloroplastic (751 aa).

The interval 86-156 is disordered; sequence KKEKSKFRKD…KSKKQTSAKN (71 aa). Positions 93–106 are enriched in basic and acidic residues; the sequence is RKDEDYDSLKREDN. The segment covering 129 to 143 has biased composition (low complexity); the sequence is VSNTNTLNKKNVVKS. One can recognise a tr-type G domain in the interval 250-423; it reads KRPPVIAIMG…ILVSEIEDLK (174 aa). Residues 259–266 are G1; that stretch reads GHVDHGKT. 259–266 is a GTP binding site; sequence GHVDHGKT. A G2 region spans residues 284 to 288; sequence GITQK. The tract at residues 309–312 is G3; that stretch reads DTPG. GTP-binding positions include 309–313 and 363–366; these read DTPGH and NKID. The tract at residues 363–366 is G4; the sequence is NKID. Residues 399–401 are G5; sequence SAM.

It belongs to the TRAFAC class translation factor GTPase superfamily. Classic translation factor GTPase family. IF-2 subfamily.

Its subcellular location is the plastid. The protein resides in the chloroplast. Its function is as follows. One of the essential components for the initiation of protein synthesis. Protects formylmethionyl-tRNA from spontaneous hydrolysis and promotes its binding to the 30S ribosomal subunits. Also involved in the hydrolysis of GTP during the formation of the 70S ribosomal complex. This Rhodomonas salina (Cryptomonas salina) protein is Translation initiation factor IF-2, chloroplastic (infB).